Here is a 1308-residue protein sequence, read N- to C-terminus: MALSISTLNTNGCRNPFRMFQVLSFLRQGGYSVSFLQETHTTPELEASWNLEWKGRVFFNHLTWTSCGVVTLFSDSFQPEVLSATSVIPGRLLHLRVRESGRTYNLMNVYAPTTGPERARFFESLSAYMETIDSDEALIIGGDFNYTLDARDRNVPKKRDSSESVLRELIAHFSLVDVWREQNPETVAFTYVRVRDGHVSQSRIDRIYISSHLMSRAQSSTIRLAPFSDHNCVSLRMSIAPSLPKAAYWHFNNSLLEDEGFAKSVRDTWRGWRAFQDEFATLNQWWDVGKVHLKLLCQEYTKSVSGQRNAEIEALNGEVLDLEQRLSGSEDQALQCEYLERKEALRNMEQRQARGAFVRSRMQLLCDMDRGSRFFYALEKKKGNRKQITCLFAEDGTPLEDPEAIRDRARSFYQNLFSPDPISPDACEELWDGLPVVSERRKERLETPITLDELSQALRLMPHNKSPGLDGLTIEFFQFFWDTLGPDFHRVLTEAFKKGELPLSCRRAVLSLLPKKGDLRLIKNWRPVSLLSTDYKIVAKAISLRLKSVLAEVIHPDQSYTVPGRTIFDNVFLIRDLLHFARRTGLSLAFLSLDQEKAFDRVDHQYLIGTLQAYSFGPQFVGYLKTMYASAECLVKINWSLTAPLAFGRGVRQGCPLSGQLYSLAIEPFLCLLRKRLTGLVLKEPDMRVVLSAYADDVILVAQDLVDLERAQECQEVYAAASSARINWSKSSGLLEGSLKVDFLPPAFRDISWESKIIKYLGVYLSAEEYPVSQNFIELEECVLTRLGKWKGFAKVLSMRGRALVINQLVASQIWYRLICLSPTQEFIAKIQRRLLDFLWIGKHWVSAGVSSLPLKEGGQGVVCIRSQVHTFRLQQIQRYLYADPSPQWCTLASSFYRQVRNMGYDRQLFIIEPEGFLRNLSTLPAYYQDTLKTWSMVSVLRQGATEGEDILNEPLLYNPSFKTRMLESISIRRRLCQAQLTRVGDLLDFEKSDWVDSQAVMQRMGFLTTRVPHRLLKEIKDTISPDSHTFIDGVLHAGEPRPPWNSSPPDIIIAPKTRQSPQAPPSPNLSQLENFPLTRFHDITRKLLYSLMLHTVHFLALISRYDTIWRRVLNEGERPQWRAFYSSLVPRPTGDLSWKVLHGALSTGEYLARFTDSPAACPFCGKGESVFHAYFTCARLQPLLALLRKLYLQFWLHFSPHVYIFGRPVSRDNKEKDLLSNLLLALAKLVIHKSRKQCLEGGNPLPAEVLFRVLVRSRIRAEYTQAVFTGRLKEFADQWAIDGVLCSVSPDLVSVQTILTLPYLSAL.

The Reverse transcriptase domain maps to 494 to 765; sequence EAFKKGELPL…KIIKYLGVYL (272 aa).

The sequence is that of Transposon TX1 uncharacterized 149 kDa protein from Xenopus laevis (African clawed frog).